The primary structure comprises 389 residues: Succinate--CoA ligase [ADP-forming] subunit beta (389 aa).

Positions 9–244 (KQLLAEYGIP…KTQEDETEVT (236 aa)) constitute an ATP-grasp domain. ATP-binding positions include K46, 53–55 (GRG), G102, and E107. Residues N199 and D213 each coordinate Mg(2+). Residues N264 and 321–323 (GIV) contribute to the substrate site.

Belongs to the succinate/malate CoA ligase beta subunit family. In terms of assembly, heterotetramer of two alpha and two beta subunits. Mg(2+) serves as cofactor.

The enzyme catalyses succinate + ATP + CoA = succinyl-CoA + ADP + phosphate. It catalyses the reaction GTP + succinate + CoA = succinyl-CoA + GDP + phosphate. Its pathway is carbohydrate metabolism; tricarboxylic acid cycle; succinate from succinyl-CoA (ligase route): step 1/1. Its function is as follows. Succinyl-CoA synthetase functions in the citric acid cycle (TCA), coupling the hydrolysis of succinyl-CoA to the synthesis of either ATP or GTP and thus represents the only step of substrate-level phosphorylation in the TCA. The beta subunit provides nucleotide specificity of the enzyme and binds the substrate succinate, while the binding sites for coenzyme A and phosphate are found in the alpha subunit. This is Succinate--CoA ligase [ADP-forming] subunit beta from Xanthomonas axonopodis pv. citri (strain 306).